Reading from the N-terminus, the 366-residue chain is Tyrosyl-DNA phosphodiesterase 2 (366 aa).

Residue M1 is modified to N-acetylmethionine. Residues M1 to A22 show a composition bias toward low complexity. The segment at M1 to K30 is disordered. K30 participates in a covalent cross-link: Glycyl lysine isopeptide (Lys-Gly) (interchain with G-Cter in SUMO2). T95 bears the Phosphothreonine; by ACVR1B mark. Residues N126–L130 are interaction with 5' end of substrate DNA. Positions 128 and 158 each coordinate Mg(2+). An interaction with 5' end of substrate DNA region spans residues H232–R237. D268 serves as the catalytic Proton donor/acceptor. The tract at residues N270–R272 is interaction with 5' end of substrate DNA.

This sequence belongs to the CCR4/nocturin family. Interacts with TRAF2, TRAF3, TRAF5, TRAF6, TNFRSF8/CD30, TNFRSF5/CD40, TNFRSF1B/TNF-R75, ETS1, ETS2, FLI1, SMAD3 and ACVR1B/ALK4. It depends on Mg(2+) as a cofactor. Mn(2+) serves as cofactor. Post-translationally, ubiquitinated by TRAF6.

The protein localises to the nucleus. It localises to the PML body. The protein resides in the nucleolus. It is found in the cytoplasm. Its function is as follows. DNA repair enzyme that can remove a variety of covalent adducts from DNA through hydrolysis of a 5'-phosphodiester bond, giving rise to DNA with a free 5' phosphate. Catalyzes the hydrolysis of dead-end complexes between DNA and the topoisomerase 2 (TOP2) active site tyrosine residue. The 5'-tyrosyl DNA phosphodiesterase activity can enable the repair of TOP2-induced DNA double-strand breaks/DSBs without the need for nuclease activity, creating a 'clean' DSB with 5'-phosphate termini that are ready for ligation. Thereby, protects the transcription of many genes involved in neurological development and maintenance from the abortive activity of TOP2. Hydrolyzes 5'-phosphoglycolates on protruding 5' ends on DSBs due to DNA damage by radiation and free radicals. Has preference for single-stranded DNA or duplex DNA with a 4 base pair overhang as substrate. Also has 3'-tyrosyl DNA phosphodiesterase activity, but less efficiently and much slower than TDP1. Constitutes the major if not only 5'-tyrosyl-DNA phosphodiesterase in cells. Also acts as an adapter by participating in the specific activation of MAP3K7/TAK1 in response to TGF-beta: associates with components of the TGF-beta receptor-TRAF6-TAK1 signaling module and promotes their ubiquitination dependent complex formation. Involved in non-canonical TGF-beta induced signaling routes. May also act as a negative regulator of ETS1 and may inhibit NF-kappa-B activation. Acts as a regulator of ribosome biogenesis following stress. The chain is Tyrosyl-DNA phosphodiesterase 2 (Tdp2) from Rattus norvegicus (Rat).